The following is a 191-amino-acid chain: Salivary lipocalin (191 aa).

An N-terminal signal peptide occupies residues 1 to 16 (MKLLLLLCLGLTLASS). An N-linked (GlcNAc...) asparagine glycan is attached at Asn69. A disulfide bond links Cys84 and Cys176.

The protein belongs to the calycin superfamily. Lipocalin family. As to quaternary structure, homodimer. As to expression, in the submaxillary salivary glands of mature male pigs, but absent from that of females. Expression was much lower in submaxillary glands of castrated male pigs than in sexually mature individuals.

Its subcellular location is the secreted. In terms of biological role, binds pheromones, the pheromones are released from the saliva of males and affect the sexual behavior of females. This Sus scrofa (Pig) protein is Salivary lipocalin (SAL1).